The primary structure comprises 247 residues: ATP synthase subunit a, chloroplastic (247 aa).

Transmembrane regions (helical) follow at residues 38 to 58, 95 to 115, 134 to 154, 199 to 219, and 220 to 240; these read QVLI…TLAV, VPFI…GALL, INTT…AGLT, LVVV…VMFL, and GLFT…AYIG.

The protein belongs to the ATPase A chain family. F-type ATPases have 2 components, CF(1) - the catalytic core - and CF(0) - the membrane proton channel. CF(1) has five subunits: alpha(3), beta(3), gamma(1), delta(1), epsilon(1). CF(0) has four main subunits: a, b, b' and c.

Its subcellular location is the plastid. It is found in the chloroplast thylakoid membrane. Functionally, key component of the proton channel; it plays a direct role in the translocation of protons across the membrane. The protein is ATP synthase subunit a, chloroplastic of Guizotia abyssinica (Niger).